The sequence spans 343 residues: MTGVTVCCGTVNSIKALWETRIKKTKDDLKKEKEQKDRRAVGRLTGAWEDRIILAKLKEKIVTEEGRVILRIEKEEWKTLPPALVQLSQIQEWQLHRIGLQRIPRFISSFQSLIVLDLSRNSVTEIPKEIGKLTRLRELLLSYNRVSYVPEELGCCENLEKLELAMNRDLDELPTQLSNLKKLSHLDLSMNQFTTIPDCVVNLPSLEWLDMGSNILETLPDNIHRMEKLHTLWLPRNELEYLPDNISRMKSLDTLVLSKNKLRDIPPLMEGMSNLRFVNFRDNPLTYDVTLPDLNEDVEEEENDREMFGREFMNFYIQEARKRGSQNFTSVLNVMLEGVSETA.

LRR repeat units follow at residues 64 to 87, 88 to 110, 111 to 133, 134 to 156, 158 to 180, 181 to 203, 204 to 226, 228 to 249, 250 to 274, and 275 to 295; these read EEGR…LVQL, SQIQ…ISSF, QSLI…IGKL, TRLR…LGCC, NLEK…LSNL, KKLS…VVNL, PSLE…IHRM, KLHT…ISRM, KSLD…GMSN, and LRFV…PDLN.

The protein localises to the cytoplasm. It is found in the myofibril. It localises to the sarcomere. The protein resides in the m line. Component of the sarcomeric M-band which plays a role in myocyte response to biomechanical stress. May regulate expression of other M-band proteins via an SRF-dependent pathway. Important for normal contractile function in heart. This chain is Leucine-rich repeat-containing protein 39, found in Danio rerio (Zebrafish).